Reading from the N-terminus, the 2435-residue chain is ATP-binding cassette sub-family A member 2 (2435 aa).

Asn-14 carries an N-linked (GlcNAc...) asparagine glycan. A run of 2 helical transmembrane segments spans residues 22–42 and 54–74; these read PWVL…LLGL and AFYT…QSLC. N-linked (GlcNAc...) asparagine glycans are attached at residues Asn-89, Asn-168, and Asn-173. The residue at position 271 (Gln-271) is an N5-methylglutamine. Residues Asn-305, Asn-368, Asn-379, Asn-420, Asn-432, Asn-476, Asn-484, Asn-494, Asn-530, Asn-544, Asn-590, Asn-600, and Asn-628 are each glycosylated (N-linked (GlcNAc...) asparagine). 6 consecutive transmembrane segments (helical) span residues 699–719, 750–770, 782–802, 813–833, 857–877, and 893–913; these read FLFV…VYSV, VAWF…LTAI, VVII…FCFL, ASAC…YVAI, AFGL…GIQW, and LLAV…TWYI. The ABC transporter 1 domain occupies 990 to 1221; it reads VCVDKLTKVY…YGDGYRLTLV (232 aa). 1024-1031 lines the ATP pocket; the sequence is GHNGAGKT. Disordered regions lie at residues 1223 to 1243 and 1325 to 1357; these read RPAE…PGRA and DQSL…GHAG. 3 positions are modified to phosphoserine: Ser-1238, Ser-1327, and Ser-1331. Residues 1333-1342 show a composition bias toward basic and acidic residues; the sequence is ADVKESRKDV. Asn-1408 carries an N-linked (GlcNAc...) asparagine glycan. Residues 1456-1476 traverse the membrane as a helical segment; sequence ALFSQILLPAFFVCVAMTVAL. N-linked (GlcNAc...) asparagine glycosylation is found at Asn-1496, Asn-1549, and Asn-1557. The tract at residues 1586 to 1610 is disordered; it reads SNFVPPPPSPAPSDSPASPDEDLQA. The segment covering 1589–1598 has biased composition (pro residues); it reads VPPPPSPAPS. Residues Asn-1612, Asn-1677, and Asn-1775 are each glycosylated (N-linked (GlcNAc...) asparagine). The next 5 helical transmembrane spans lie at 1792-1812, 1841-1861, 1872-1892, 1905-1925, and 1991-2011; these read VVIA…FVVF, VWDM…LFVF, FPAV…IMYP, VFLI…TFLL, and GLVA…MCQY. Residues 2050 to 2285 form the ABC transporter 2 domain; it reads VKIENLTKVY…FGDGYMITVR (236 aa). A glycan (N-linked (GlcNAc...) asparagine) is linked at Asn-2054. 2087-2094 is an ATP binding site; the sequence is GVNGAGKT. Thr-2412 is subject to Phosphothreonine.

The protein belongs to the ABC transporter superfamily. ABCA family. Methylated at Gln-271 by N6AMT1. As to expression, highly expressed in the brain,peripheral blood leukocytes and ovary, whereas lower levels of expression is observed in kidney and liver. In terms of tissue distribution, weakly expressed in brain and highly in peripheral blood leukocytes.

The protein resides in the endosome membrane. It is found in the lysosome membrane. Probable lipid transporter that modulates cholesterol sequestration in the late endosome/lysosome by regulating the intracellular sphingolipid metabolism, in turn participates in cholesterol homeostasis. May alter the transbilayer distribution of ceramide in the intraluminal membrane lipid bilayer, favoring its retention in the outer leaflet that results in increased acid ceramidase activity in the late endosome/lysosome, facilitating ceramide deacylation to sphingosine leading to the sequestration of free cholesterol in lysosomes. In addition regulates amyloid-beta production either by activating a signaling pathway that regulates amyloid precursor protein transcription through the modulation of sphingolipid metabolism or through its role in gamma-secretase processing of APP. May play a role in myelin formation. This chain is ATP-binding cassette sub-family A member 2, found in Homo sapiens (Human).